Reading from the N-terminus, the 489-residue chain is UDP-N-acetylmuramoyl-L-alanyl-D-glutamate--2,6-diaminopimelate ligase (489 aa).

S30 contacts UDP-N-acetyl-alpha-D-muramoyl-L-alanyl-D-glutamate. 110 to 116 (GTNGKTT) lines the ATP pocket. UDP-N-acetyl-alpha-D-muramoyl-L-alanyl-D-glutamate-binding positions include 152-153 (TT), S179, and R187. Position 219 is an N6-carboxylysine (K219). Meso-2,6-diaminopimelate contacts are provided by residues R381, 405 to 408 (DNPR), G458, and E462. The Meso-diaminopimelate recognition motif motif lies at 405–408 (DNPR).

Belongs to the MurCDEF family. MurE subfamily. Mg(2+) serves as cofactor. Carboxylation is probably crucial for Mg(2+) binding and, consequently, for the gamma-phosphate positioning of ATP.

It is found in the cytoplasm. It catalyses the reaction UDP-N-acetyl-alpha-D-muramoyl-L-alanyl-D-glutamate + meso-2,6-diaminopimelate + ATP = UDP-N-acetyl-alpha-D-muramoyl-L-alanyl-gamma-D-glutamyl-meso-2,6-diaminopimelate + ADP + phosphate + H(+). Its pathway is cell wall biogenesis; peptidoglycan biosynthesis. Its function is as follows. Catalyzes the addition of meso-diaminopimelic acid to the nucleotide precursor UDP-N-acetylmuramoyl-L-alanyl-D-glutamate (UMAG) in the biosynthesis of bacterial cell-wall peptidoglycan. This chain is UDP-N-acetylmuramoyl-L-alanyl-D-glutamate--2,6-diaminopimelate ligase, found in Syntrophomonas wolfei subsp. wolfei (strain DSM 2245B / Goettingen).